Here is a 907-residue protein sequence, read N- to C-terminus: Protein translocase subunit SecA (907 aa).

Residues glutamine 87, 105–109 (GEGKT), and aspartate 512 each bind ATP. The interval 834–907 (QSDVDDMEQR…KYKQCHGKLS (74 aa)) is disordered. The segment covering 840–856 (MEQRRREEEAKIQRDYQ) has biased composition (basic and acidic residues). Residues 865–876 (DESQASSDNTPK) show a composition bias toward polar residues. Over residues 878-887 (MIREGDKVGR) the composition is skewed to basic and acidic residues. Zn(2+) contacts are provided by cysteine 891, cysteine 893, cysteine 902, and histidine 903. Positions 897–907 (KKYKQCHGKLS) are enriched in basic residues.

The protein belongs to the SecA family. In terms of assembly, monomer and homodimer. Part of the essential Sec protein translocation apparatus which comprises SecA, SecYEG and auxiliary proteins SecDF-YajC and YidC. Zn(2+) is required as a cofactor.

The protein resides in the cell inner membrane. It is found in the cytoplasm. It catalyses the reaction ATP + H2O + cellular proteinSide 1 = ADP + phosphate + cellular proteinSide 2.. Its function is as follows. Part of the Sec protein translocase complex. Interacts with the SecYEG preprotein conducting channel. Has a central role in coupling the hydrolysis of ATP to the transfer of proteins into and across the cell membrane, serving both as a receptor for the preprotein-SecB complex and as an ATP-driven molecular motor driving the stepwise translocation of polypeptide chains across the membrane. The sequence is that of Protein translocase subunit SecA from Shewanella denitrificans (strain OS217 / ATCC BAA-1090 / DSM 15013).